The chain runs to 385 residues: 3-dehydroquinate synthase (385 aa).

NAD(+)-binding positions include glycine 122–aspartate 126, threonine 146–threonine 147, lysine 159, and lysine 168. Zn(2+) contacts are provided by glutamate 201, histidine 264, and histidine 282.

The protein belongs to the sugar phosphate cyclases superfamily. Dehydroquinate synthase family. Co(2+) is required as a cofactor. Zn(2+) serves as cofactor. The cofactor is NAD(+).

It is found in the cytoplasm. The enzyme catalyses 7-phospho-2-dehydro-3-deoxy-D-arabino-heptonate = 3-dehydroquinate + phosphate. Its pathway is metabolic intermediate biosynthesis; chorismate biosynthesis; chorismate from D-erythrose 4-phosphate and phosphoenolpyruvate: step 2/7. Catalyzes the conversion of 3-deoxy-D-arabino-heptulosonate 7-phosphate (DAHP) to dehydroquinate (DHQ). The polypeptide is 3-dehydroquinate synthase (Rhodospirillum rubrum (strain ATCC 11170 / ATH 1.1.1 / DSM 467 / LMG 4362 / NCIMB 8255 / S1)).